The chain runs to 591 residues: CTP synthase (591 aa).

Residues 1-281 form an amidoligase domain region; that stretch reads MPQSRTHSRT…DAYVVRQLGL (281 aa). Serine 23 serves as a coordination point for CTP. Serine 23 lines the UTP pocket. Residues 24–29 and aspartate 81 each bind ATP; that span reads SLGKGL. Residues aspartate 81 and glutamate 155 each contribute to the Mg(2+) site. Residues 162–164, 202–207, and lysine 238 each bind CTP; these read DIE and KTKPTQ. UTP-binding positions include 202–207 and lysine 238; that span reads KTKPTQ. Residues 306–554 form the Glutamine amidotransferase type-1 domain; sequence RIALVGKYVD…VDAALKHKLE (249 aa). Glycine 369 is an L-glutamine binding site. Cysteine 396 (nucleophile; for glutamine hydrolysis) is an active-site residue. L-glutamine is bound by residues 397–400, glutamate 419, and arginine 480; that span reads LGLQ. Active-site residues include histidine 527 and glutamate 529. The interval 568-591 is disordered; the sequence is AVATDDELADSADRDEVASVDSAG.

It belongs to the CTP synthase family. As to quaternary structure, homotetramer.

It catalyses the reaction UTP + L-glutamine + ATP + H2O = CTP + L-glutamate + ADP + phosphate + 2 H(+). The catalysed reaction is L-glutamine + H2O = L-glutamate + NH4(+). The enzyme catalyses UTP + NH4(+) + ATP = CTP + ADP + phosphate + 2 H(+). Its pathway is pyrimidine metabolism; CTP biosynthesis via de novo pathway; CTP from UDP: step 2/2. Allosterically activated by GTP, when glutamine is the substrate; GTP has no effect on the reaction when ammonia is the substrate. The allosteric effector GTP functions by stabilizing the protein conformation that binds the tetrahedral intermediate(s) formed during glutamine hydrolysis. Inhibited by the product CTP, via allosteric rather than competitive inhibition. Functionally, catalyzes the ATP-dependent amination of UTP to CTP with either L-glutamine or ammonia as the source of nitrogen. Regulates intracellular CTP levels through interactions with the four ribonucleotide triphosphates. The chain is CTP synthase from Rhodococcus jostii (strain RHA1).